A 383-amino-acid polypeptide reads, in one-letter code: PqqA peptide cyclase (383 aa).

The Radical SAM core domain occupies 11–226 (PGPPLWLLAE…TNQWREKLAA (216 aa)). Positions 25, 29, and 32 each coordinate [4Fe-4S] cluster.

It belongs to the radical SAM superfamily. PqqE family. As to quaternary structure, interacts with PqqD. The interaction is necessary for activity of PqqE. [4Fe-4S] cluster serves as cofactor.

It carries out the reaction [PQQ precursor protein] + S-adenosyl-L-methionine = E-Y cross-linked-[PQQ precursor protein] + 5'-deoxyadenosine + L-methionine + H(+). It functions in the pathway cofactor biosynthesis; pyrroloquinoline quinone biosynthesis. Its function is as follows. Catalyzes the cross-linking of a glutamate residue and a tyrosine residue in the PqqA protein as part of the biosynthesis of pyrroloquinoline quinone (PQQ). This Azotobacter vinelandii (strain DJ / ATCC BAA-1303) protein is PqqA peptide cyclase.